Here is a 287-residue protein sequence, read N- to C-terminus: ATP synthase subunit a (287 aa).

6 helical membrane-spanning segments follow: residues 38–58 (DSMV…WTAA), 96–116 (FIAP…AMDM), 139–161 (VVPT…LRFW), 187–207 (PLFA…EYVA), 225–245 (LVFM…SGVL), and 259–279 (LFHI…ALIY).

It belongs to the ATPase A chain family. F-type ATPases have 2 components, CF(1) - the catalytic core - and CF(0) - the membrane proton channel. CF(1) has five subunits: alpha(3), beta(3), gamma(1), delta(1), epsilon(1). CF(0) has three main subunits: a(1), b(2) and c(9-12). The alpha and beta chains form an alternating ring which encloses part of the gamma chain. CF(1) is attached to CF(0) by a central stalk formed by the gamma and epsilon chains, while a peripheral stalk is formed by the delta and b chains.

The protein localises to the cell inner membrane. Functionally, key component of the proton channel; it plays a direct role in the translocation of protons across the membrane. This is ATP synthase subunit a from Verminephrobacter eiseniae (strain EF01-2).